The following is a 67-amino-acid chain: MKLTCVLIAAVLLLAVCQLDSADATGYMRKNPSLRSPKRTRGCKSKGSFCWNGIECCGGNCFFACIY.

Residues 1-24 (MKLTCVLIAAVLLLAVCQLDSADA) form the signal peptide. The propeptide occupies 25–37 (TGYMRKNPSLRSP). Disulfide bonds link Cys-43-Cys-57, Cys-50-Cys-61, and Cys-56-Cys-65.

It belongs to the conotoxin O1 superfamily. As to expression, expressed by the venom duct.

It localises to the secreted. The chain is Conotoxin Cl6.6a from Californiconus californicus (California cone).